A 364-amino-acid chain; its full sequence is Histidinol-phosphate aminotransferase 2 (364 aa).

Lys223 is modified (N6-(pyridoxal phosphate)lysine).

Belongs to the class-II pyridoxal-phosphate-dependent aminotransferase family. Histidinol-phosphate aminotransferase subfamily. Homodimer. It depends on pyridoxal 5'-phosphate as a cofactor.

The catalysed reaction is L-histidinol phosphate + 2-oxoglutarate = 3-(imidazol-4-yl)-2-oxopropyl phosphate + L-glutamate. The protein operates within amino-acid biosynthesis; L-histidine biosynthesis; L-histidine from 5-phospho-alpha-D-ribose 1-diphosphate: step 7/9. This is Histidinol-phosphate aminotransferase 2 (hisC2) from Oceanobacillus iheyensis (strain DSM 14371 / CIP 107618 / JCM 11309 / KCTC 3954 / HTE831).